Consider the following 394-residue polypeptide: Argininosuccinate synthase (394 aa).

An ATP-binding site is contributed by 8 to 16; it reads AYSGGLDTS. L-citrulline contacts are provided by Tyr-86 and Ser-91. Gly-116 contributes to the ATP binding site. L-aspartate is bound by residues Thr-118, Asn-122, and Asp-123. L-citrulline is bound at residue Asn-122. L-citrulline-binding residues include Arg-126, Ser-172, Ser-181, Glu-257, and Tyr-269.

This sequence belongs to the argininosuccinate synthase family. Type 1 subfamily. Homotetramer.

The protein resides in the cytoplasm. The catalysed reaction is L-citrulline + L-aspartate + ATP = 2-(N(omega)-L-arginino)succinate + AMP + diphosphate + H(+). It participates in amino-acid biosynthesis; L-arginine biosynthesis; L-arginine from L-ornithine and carbamoyl phosphate: step 2/3. This is Argininosuccinate synthase from Methanosarcina acetivorans (strain ATCC 35395 / DSM 2834 / JCM 12185 / C2A).